A 627-amino-acid polypeptide reads, in one-letter code: Phosphomethylpyrimidine synthase (627 aa).

The segment covering Met-1 to Pro-24 has biased composition (polar residues). The tract at residues Met-1–Val-29 is disordered. Substrate-binding positions include Asn-231, Met-260, Tyr-289, His-325, Ser-345–Gly-347, Asp-386–Arg-389, and Glu-425. His-429 contributes to the Zn(2+) binding site. Tyr-452 contributes to the substrate binding site. Zn(2+) is bound at residue His-493. [4Fe-4S] cluster is bound by residues Cys-573, Cys-576, and Cys-581.

This sequence belongs to the ThiC family. As to quaternary structure, homodimer. Requires [4Fe-4S] cluster as cofactor.

The enzyme catalyses 5-amino-1-(5-phospho-beta-D-ribosyl)imidazole + S-adenosyl-L-methionine = 4-amino-2-methyl-5-(phosphooxymethyl)pyrimidine + CO + 5'-deoxyadenosine + formate + L-methionine + 3 H(+). It functions in the pathway cofactor biosynthesis; thiamine diphosphate biosynthesis. Its function is as follows. Catalyzes the synthesis of the hydroxymethylpyrimidine phosphate (HMP-P) moiety of thiamine from aminoimidazole ribotide (AIR) in a radical S-adenosyl-L-methionine (SAM)-dependent reaction. The chain is Phosphomethylpyrimidine synthase from Pseudomonas aeruginosa (strain LESB58).